A 412-amino-acid chain; its full sequence is Peptidase T (412 aa).

Residue H81 coordinates Zn(2+). The active site involves D83. D144 is a binding site for Zn(2+). The Proton acceptor role is filled by E178. The Zn(2+) site is built by E179, D201, and H383.

Belongs to the peptidase M20B family. It depends on Zn(2+) as a cofactor.

It localises to the cytoplasm. The catalysed reaction is Release of the N-terminal residue from a tripeptide.. Its function is as follows. Cleaves the N-terminal amino acid of tripeptides. The polypeptide is Peptidase T (Bacillus cereus (strain ZK / E33L)).